A 326-amino-acid chain; its full sequence is High-affinity zinc uptake system protein ZnuA (326 aa).

The signal sequence occupies residues methionine 1–alanine 22. Histidine 59 contributes to the Zn(2+) binding site. Positions glycine 117–threonine 155 are enriched in basic and acidic residues. The segment at glycine 117–leucine 161 is disordered. Zn(2+)-binding residues include histidine 158, histidine 222, and aspartate 295. The cysteines at positions 267 and 322 are disulfide-linked.

This sequence belongs to the bacterial solute-binding protein 9 family. Monomer.

It localises to the periplasm. Its function is as follows. Part of the ATP-binding cassette (ABC) transport system ZnuABC involved in zinc import. Binds zinc with high affinity and specificity and delivers it to the membrane permease for translocation into the cytoplasm. The chain is High-affinity zinc uptake system protein ZnuA from Paracoccus denitrificans (strain Pd 1222).